Consider the following 594-residue polypeptide: Dual specificity protein phosphatase CDC14A (594 aa).

Positions 7-162 (ELIGACEFMK…GLQHGFFDFE (156 aa)) are a. The tract at residues 163-176 (TFDVDEYEHYERVE) is linker. A b region spans residues 177–343 (NGDFNWIVPG…QGDIFRSKLK (167 aa)). The Tyrosine-protein phosphatase domain maps to 179-336 (DFNWIVPGKF…KQASLWVQGD (158 aa)). Residue Cys-278 is the Phosphocysteine intermediate of the active site. A disordered region spans residues 396–435 (GDKLRALKSQRQPRTSPSCAFRSDDTKGHPRAVSQPFRLS). The segment covering 404–413 (SQRQPRTSPS) has biased composition (polar residues). Ser-484 bears the Phosphoserine mark. The tract at residues 487 to 560 (NLNAATDDPE…PGPHSAKTEE (74 aa)) is disordered. Residues 500–531 (TSSSSKAGFTASPFTNLLNGSSQPTTRNYPEL) show a composition bias toward polar residues. Over residues 532-549 (NNNQYNRSSNSNGGNLNS) the composition is skewed to low complexity. The residue at position 583 (Ser-583) is a Phosphoserine.

The protein belongs to the protein-tyrosine phosphatase family. Non-receptor class CDC14 subfamily. Interacts with KIF20A, which is required to localize CDC14 to the midzone of the mitotic spindle.

The protein resides in the nucleus. It is found in the cytoplasm. Its subcellular location is the cytoskeleton. It localises to the microtubule organizing center. The protein localises to the centrosome. The protein resides in the spindle pole. It is found in the spindle. Its subcellular location is the cell projection. It localises to the kinocilium. The protein localises to the stereocilium. The enzyme catalyses O-phospho-L-tyrosyl-[protein] + H2O = L-tyrosyl-[protein] + phosphate. The catalysed reaction is O-phospho-L-seryl-[protein] + H2O = L-seryl-[protein] + phosphate. It carries out the reaction O-phospho-L-threonyl-[protein] + H2O = L-threonyl-[protein] + phosphate. Functionally, dual-specificity phosphatase. Required for centrosome separation and productive cytokinesis during cell division. Dephosphorylates SIRT2 around early anaphase. May dephosphorylate the APC subunit FZR1/CDH1, thereby promoting APC-FZR1 dependent degradation of mitotic cyclins and subsequent exit from mitosis. Required for normal hearing. In Homo sapiens (Human), this protein is Dual specificity protein phosphatase CDC14A (CDC14A).